We begin with the raw amino-acid sequence, 432 residues long: Adenylosuccinate synthetase (432 aa).

GTP contacts are provided by residues 13-19 (GDEGKGK) and 41-43 (GHT). Residue D14 is the Proton acceptor of the active site. The Mg(2+) site is built by D14 and G41. IMP contacts are provided by residues 14 to 17 (DEGK), 39 to 42 (NAGH), T130, R144, Q225, T240, and R304. The active-site Proton donor is the H42. 300–306 (ATTGRKR) is a substrate binding site. GTP is bound by residues R306, 332-334 (KLD), and 415-417 (STG).

The protein belongs to the adenylosuccinate synthetase family. Homodimer. Mg(2+) serves as cofactor.

The protein resides in the cytoplasm. The catalysed reaction is IMP + L-aspartate + GTP = N(6)-(1,2-dicarboxyethyl)-AMP + GDP + phosphate + 2 H(+). Its pathway is purine metabolism; AMP biosynthesis via de novo pathway; AMP from IMP: step 1/2. In terms of biological role, plays an important role in the de novo pathway of purine nucleotide biosynthesis. Catalyzes the first committed step in the biosynthesis of AMP from IMP. The polypeptide is Adenylosuccinate synthetase (Vibrio cholerae serotype O1 (strain M66-2)).